The primary structure comprises 545 residues: Phenylalanine--tRNA ligase beta subunit (545 aa).

One can recognise a B5 domain in the interval 268–343 (FLHKIQNVRE…MSIGYNNLEP (76 aa)). The Mg(2+) site is built by aspartate 321, aspartate 327, glutamate 330, and aspartate 331.

The protein belongs to the phenylalanyl-tRNA synthetase beta subunit family. Type 2 subfamily. In terms of assembly, tetramer of two alpha and two beta subunits. Mg(2+) is required as a cofactor.

It localises to the cytoplasm. It catalyses the reaction tRNA(Phe) + L-phenylalanine + ATP = L-phenylalanyl-tRNA(Phe) + AMP + diphosphate + H(+). The chain is Phenylalanine--tRNA ligase beta subunit from Saccharolobus islandicus (strain L.S.2.15 / Lassen #1) (Sulfolobus islandicus).